Here is a 289-residue protein sequence, read N- to C-terminus: Formamidopyrimidine-DNA glycosylase (289 aa).

The Schiff-base intermediate with DNA role is filled by Pro-2. The Proton donor role is filled by Glu-3. Residue Lys-61 is the Proton donor; for beta-elimination activity of the active site. DNA contacts are provided by His-96, Arg-115, and Lys-161. The FPG-type zinc-finger motif lies at 247 to 281; the sequence is SAYGQENLPCPRCGAPIKREKFMNRSSFSCPRCQP. Catalysis depends on Arg-271, which acts as the Proton donor; for delta-elimination activity.

This sequence belongs to the FPG family. In terms of assembly, monomer. It depends on Zn(2+) as a cofactor.

The catalysed reaction is Hydrolysis of DNA containing ring-opened 7-methylguanine residues, releasing 2,6-diamino-4-hydroxy-5-(N-methyl)formamidopyrimidine.. It catalyses the reaction 2'-deoxyribonucleotide-(2'-deoxyribose 5'-phosphate)-2'-deoxyribonucleotide-DNA = a 3'-end 2'-deoxyribonucleotide-(2,3-dehydro-2,3-deoxyribose 5'-phosphate)-DNA + a 5'-end 5'-phospho-2'-deoxyribonucleoside-DNA + H(+). Functionally, involved in base excision repair of DNA damaged by oxidation or by mutagenic agents. Acts as a DNA glycosylase that recognizes and removes damaged bases. Has a preference for oxidized purines, such as 7,8-dihydro-8-oxoguanine (8-oxoG). Has AP (apurinic/apyrimidinic) lyase activity and introduces nicks in the DNA strand. Cleaves the DNA backbone by beta-delta elimination to generate a single-strand break at the site of the removed base with both 3'- and 5'-phosphates. The polypeptide is Formamidopyrimidine-DNA glycosylase (Rhodococcus erythropolis (strain PR4 / NBRC 100887)).